Here is a 105-residue protein sequence, read N- to C-terminus: U21-theraphotoxin-Cg1a 4 (105 aa).

Positions 1–21 (MKVSVLITLAVLGVMFLLTSA) are cleaved as a signal peptide. A propeptide spanning residues 22 to 48 (EERGSDQMDSPAWLKSMEIIFQSEERE) is cleaved from the precursor. 3 disulfides stabilise this stretch: Cys-49–Cys-63, Cys-56–Cys-68, and Cys-62–Cys-76. At Val-82 the chain carries Valine amide. The propeptide occupies 83–105 (GKWEMLINMNIFRIVFSYSMCTV).

Belongs to the neurotoxin 10 (Hwtx-1) family. 05 (F4a) subfamily. As to expression, expressed by the venom gland.

It localises to the secreted. In terms of biological role, probable ion channel inhibitor. The sequence is that of U21-theraphotoxin-Cg1a 4 from Chilobrachys guangxiensis (Chinese earth tiger tarantula).